We begin with the raw amino-acid sequence, 25 residues long: C-type natriuretic peptide (25 aa).

A disulfide bridge links Cys-9 with Cys-25.

Venom gland.

The protein resides in the secreted. Snake venom natriuretic peptide that has a vasorelaxant activity in rat aortic strips and a diuretic potency in anesthetized rats. May act by activating natriuretic receptors (NPR1 and/or NPR2). In Crotalus atrox (Western diamondback rattlesnake), this protein is C-type natriuretic peptide.